Consider the following 320-residue polypeptide: Na(+)-translocating NADH-quinone reductase subunit C (320 aa).

Residues 16–36 traverse the membrane as a helical segment; that stretch reads WYIVSFILGLSLFAGVLLSTI. FMN phosphoryl threonine is present on Thr-285.

The protein belongs to the NqrC family. In terms of assembly, composed of six subunits; NqrA, NqrB, NqrC, NqrD, NqrE and NqrF. It depends on FMN as a cofactor.

Its subcellular location is the cell inner membrane. It carries out the reaction a ubiquinone + n Na(+)(in) + NADH + H(+) = a ubiquinol + n Na(+)(out) + NAD(+). Its function is as follows. NQR complex catalyzes the reduction of ubiquinone-1 to ubiquinol by two successive reactions, coupled with the transport of Na(+) ions from the cytoplasm to the periplasm. NqrA to NqrE are probably involved in the second step, the conversion of ubisemiquinone to ubiquinol. The sequence is that of Na(+)-translocating NADH-quinone reductase subunit C from Chlamydia pneumoniae (Chlamydophila pneumoniae).